A 962-amino-acid polypeptide reads, in one-letter code: Alpha-glucan phosphorylase 1 (962 aa).

The N-terminal 63 residues, 1–63 (MDTMRISGVS…RSFLSVKSIS (63 aa)), are a transit peptide targeting the chloroplast. The interval 525–552 (AKDAQNGVKTEQEEEKTAGEEEEDEVIP) is disordered. At Lys-808 the chain carries N6-(pyridoxal phosphate)lysine.

It belongs to the glycogen phosphorylase family. It depends on pyridoxal 5'-phosphate as a cofactor.

The protein localises to the plastid. Its subcellular location is the chloroplast stroma. The enzyme catalyses [(1-&gt;4)-alpha-D-glucosyl](n) + phosphate = [(1-&gt;4)-alpha-D-glucosyl](n-1) + alpha-D-glucose 1-phosphate. Phosphorylase is an important allosteric enzyme in carbohydrate metabolism. Enzymes from different sources differ in their regulatory mechanisms and in their natural substrates. However, all known phosphorylases share catalytic and structural properties. May be not required for the degradation of starch, but the phosphorolysis of starch may play an important role in water stress tolerance. The chain is Alpha-glucan phosphorylase 1 (PHS1) from Arabidopsis thaliana (Mouse-ear cress).